Consider the following 106-residue polypeptide: Large ribosomal subunit protein bL21 (106 aa).

The protein belongs to the bacterial ribosomal protein bL21 family. Part of the 50S ribosomal subunit. Contacts protein L20.

Its function is as follows. This protein binds to 23S rRNA in the presence of protein L20. In Xylella fastidiosa (strain Temecula1 / ATCC 700964), this protein is Large ribosomal subunit protein bL21.